Reading from the N-terminus, the 109-residue chain is uncharacterized protein (109 aa).

The helical transmembrane segment at 26–48 (VTSIMTVSDINYLLLYLIILLTL) threads the bilayer.

It is found in the membrane. This is an uncharacterized protein from Saccharomyces cerevisiae (strain ATCC 204508 / S288c) (Baker's yeast).